A 124-amino-acid polypeptide reads, in one-letter code: Putative B3 domain-containing protein At1g51970 (124 aa).

The TF-B3 DNA-binding region spans 18–124 (VLKKNLTESD…SRRFLFHHIN (107 aa)).

The protein localises to the nucleus. In Arabidopsis thaliana (Mouse-ear cress), this protein is Putative B3 domain-containing protein At1g51970.